The sequence spans 124 residues: Small ribosomal subunit protein uS13 (124 aa).

The segment covering 103-117 has biased composition (basic residues); it reads KCNARTRKGPRKTVA. Positions 103-124 are disordered; that stretch reads KCNARTRKGPRKTVANKKIETK.

The protein belongs to the universal ribosomal protein uS13 family. In terms of assembly, part of the 30S ribosomal subunit. Forms a loose heterodimer with protein S19. Forms two bridges to the 50S subunit in the 70S ribosome.

Located at the top of the head of the 30S subunit, it contacts several helices of the 16S rRNA. In the 70S ribosome it contacts the 23S rRNA (bridge B1a) and protein L5 of the 50S subunit (bridge B1b), connecting the 2 subunits; these bridges are implicated in subunit movement. Contacts the tRNAs in the A and P-sites. The chain is Small ribosomal subunit protein uS13 from Malacoplasma penetrans (strain HF-2) (Mycoplasma penetrans).